The primary structure comprises 151 residues: Large ribosomal subunit protein uL15 (151 aa).

A disordered region spans residues 1 to 51 (MKSLRLEDAVPQSGSRHRKLRVGRGHSAGQGKTSGRGMRGQKCRSGGGVRP). A compositionally biased stretch (basic residues) spans 15 to 24 (SRHRKLRVGR). Residues 26–38 (HSAGQGKTSGRGM) are compositionally biased toward gly residues.

This sequence belongs to the universal ribosomal protein uL15 family. As to quaternary structure, part of the 50S ribosomal subunit.

Binds to the 23S rRNA. This is Large ribosomal subunit protein uL15 from Gloeobacter violaceus (strain ATCC 29082 / PCC 7421).